Here is a 78-residue protein sequence, read N- to C-terminus: Esculentin-2ISa (78 aa).

A signal peptide spans Met1–Cys22. A propeptide spans Lys23–Val39 (removed in mature form). Cysteines 72 and 78 form a disulfide.

In terms of tissue distribution, expressed by the skin glands.

The protein localises to the secreted. Functionally, has antimicrobial activity against Gram-negative bacterium E.coli ATCC 8739 (MIC=12.5 ug), against Gram positive bacteria S.aureus ATCC 6538 (MIC=3.1 ug), methicillin-resistant S.aureus ATCC 43300 (MIC=25 ug), B.subtilis ATCC 6633 (MIC=6.3 ug) and against fungus C.albicans ATCC 90028 (MIC=100 ug). In Odorrana ishikawae (Ishikawa's frog), this protein is Esculentin-2ISa.